Reading from the N-terminus, the 388-residue chain is tRNA-specific 2-thiouridylase MnmA (388 aa).

Residues 26–33 and leucine 52 contribute to the ATP site; that span reads GLSGGVDS. Cysteine 113 serves as the catalytic Nucleophile. Cysteine 113 and cysteine 223 are joined by a disulfide. Glycine 138 contributes to the ATP binding site. The interval 173–175 is interaction with tRNA; it reads KDQ. Residue cysteine 223 is the Cysteine persulfide intermediate of the active site. Positions 328–329 are interaction with tRNA; that stretch reads RY.

The protein belongs to the MnmA/TRMU family.

It is found in the cytoplasm. It catalyses the reaction S-sulfanyl-L-cysteinyl-[protein] + uridine(34) in tRNA + AH2 + ATP = 2-thiouridine(34) in tRNA + L-cysteinyl-[protein] + A + AMP + diphosphate + H(+). Functionally, catalyzes the 2-thiolation of uridine at the wobble position (U34) of tRNA, leading to the formation of s(2)U34. The sequence is that of tRNA-specific 2-thiouridylase MnmA from Prochlorococcus marinus (strain NATL2A).